The primary structure comprises 233 residues: Large ribosomal subunit protein eL6x (233 aa).

A compositionally biased stretch (basic and acidic residues) spans 48–72; sequence HDAKSKVDAPVEKPPKFYPAEDVKK. The tract at residues 48 to 80 is disordered; that stretch reads HDAKSKVDAPVEKPPKFYPAEDVKKPLPNRRTA.

This sequence belongs to the eukaryotic ribosomal protein eL6 family.

The chain is Large ribosomal subunit protein eL6x (RPL6C) from Arabidopsis thaliana (Mouse-ear cress).